The chain runs to 231 residues: uncharacterized protein (231 aa).

Positions 1 to 25 are cleaved as a signal peptide; sequence MAKWVPALLLRRVPLFSLRFRPASS. Residues 26-200 are Extracellular-facing; sequence TFLPVLAATE…SRPSPSATLT (175 aa). Residues 39-64 form a disordered region; sequence SVPSGDLSMPVKTRAEGEDDGFGEAG. The chain crosses the membrane as a helical span at residues 201–225; sequence LLLASSCLLAPAPPSFILLLFTLIA. Topologically, residues 226 to 231 are cytoplasmic; the sequence is PDLPHS.

It localises to the membrane. This is an uncharacterized protein from Homo sapiens (Human).